The chain runs to 365 residues: Protein BZR1 homolog 2 (365 aa).

A compositionally biased stretch (gly residues) spans 1 to 30 (MATGGGGGGGGMGGGGVGGGAGAAGVGVGG). 4 disordered regions span residues 1–45 (MATG…KRRE), 113–154 (SPSP…NMAN), 191–236 (SAPV…TPPS), and 344–365 (HEDS…RAAA). Residues 31-113 (RMPTWREREN…RMEVIGCSVS (83 aa)) are required for DNA-binding. Low complexity predominate over residues 113-144 (SPSPCSSYQPSPRASYNASPTSSSFPSGASSP). Composition is skewed to polar residues over residues 215-233 (SNVQ…VNST) and 356-365 (LGSSRTRAAA).

It belongs to the BZR/LAT61 family. As to quaternary structure, interacts with PUB24.

In terms of biological role, may function in brassinosteroid signaling. This Oryza sativa subsp. japonica (Rice) protein is Protein BZR1 homolog 2.